Here is a 545-residue protein sequence, read N- to C-terminus: Phenylalanine--tRNA ligase beta subunit (545 aa).

One can recognise a B5 domain in the interval 268 to 343 (FLHKIQNVRE…MSIGYNNLEP (76 aa)). Residues Asp-321, Asp-327, Glu-330, and Asp-331 each coordinate Mg(2+).

Belongs to the phenylalanyl-tRNA synthetase beta subunit family. Type 2 subfamily. Tetramer of two alpha and two beta subunits. The cofactor is Mg(2+).

It localises to the cytoplasm. It catalyses the reaction tRNA(Phe) + L-phenylalanine + ATP = L-phenylalanyl-tRNA(Phe) + AMP + diphosphate + H(+). The chain is Phenylalanine--tRNA ligase beta subunit from Saccharolobus islandicus (strain M.14.25 / Kamchatka #1) (Sulfolobus islandicus).